We begin with the raw amino-acid sequence, 115 residues long: Large ribosomal subunit protein bL21 (115 aa).

It belongs to the bacterial ribosomal protein bL21 family. In terms of assembly, part of the 50S ribosomal subunit. Contacts protein L20.

Functionally, this protein binds to 23S rRNA in the presence of protein L20. This is Large ribosomal subunit protein bL21 from Coxiella burnetii (strain Dugway 5J108-111).